Consider the following 478-residue polypeptide: MMASDRVRKRHKGSANGAQTVEKEPSKEPAQWGRAWEVDWFSLSGVILLLCFAPFLVSFFIMACDQYQCSISHPLLDLYNGDATLFTIWNRAPSFTWAAAKIYAIWVTFQVVLYMCVPDFLHKILPGYVGGVQDGARTPAGLINKYEVNGLQCWLITHVLWVLNAQHFHWFSPTIIIDNWIPLLWCTNILGYAVSTFAFIKAYLFPTNPEDCKFTGNMFYNYMMGIEFNPRIGKWFDFKLFFNGRPGIVAWTLINLSYAAKQQELYGYVTNSMILVNVLQAVYVVDFFWNEAWYLKTIDICHDHFGWYLGWGDCVWLPFLYTLQGLYLVYNPIQLSTPHAAGVLILGLVGYYIFRVTNHQKDLFRRTEGNCSIWGKKPTFIECSYQSADGAIHKSKLMTSGFWGVARHMNYTGDLMGSLAYCLACGGNHLLPYFYIIYMTILLVHRCIRDEHRCSNKYGKDWERYTAAVSYRLLPNIF.

Positions 1-28 (MMASDRVRKRHKGSANGAQTVEKEPSKE) are disordered. 6 consecutive transmembrane segments (helical) span residues 43 to 63 (LSGVILLLCFAPFLVSFFIMA), 97 to 117 (WAAAKIYAIWVTFQVVLYMCV), 180 to 200 (WIPLLWCTNILGYAVSTFAFI), 269 to 289 (VTNSMILVNVLQAVYVVDFFW), 309 to 329 (LGWGDCVWLPFLYTLQGLYLV), and 333 to 353 (IQLSTPHAAGVLILGLVGYYI). NADP(+)-binding positions include Lys-361, Arg-365, Met-398, Trp-403, and 410–411 (NY). The helical transmembrane segment at 424–444 (ACGGNHLLPYFYIIYMTILLV) threads the bilayer. NADP(+)-binding positions include Asp-450, 454–458 (CSNKY), and Tyr-465.

The protein belongs to the ERG4/ERG24 family.

It localises to the endoplasmic reticulum membrane. The enzyme catalyses cholesterol + NADP(+) = 7-dehydrocholesterol + NADPH + H(+). It carries out the reaction 7-dehydrodesmosterol + NADPH + H(+) = desmosterol + NADP(+). It participates in steroid biosynthesis; cholesterol biosynthesis. In terms of biological role, catalyzes the last step of the cholesterol synthesis pathway, which transforms cholesta-5,7-dien-3beta-ol (7-dehydrocholesterol,7-DHC) into cholesterol by reducing the C7-C8 double bond of its sterol core. Can also metabolize cholesta-5,7,24-trien-3beta-ol (7-dehydrodemosterol, 7-DHD) to desmosterol, which is then metabolized by the Delta(24)-sterol reductase (DHCR24) to cholesterol. Modulates ferroptosis (a form of regulated cell death driven by iron-dependent lipid peroxidation) through the metabolic breakdown of the anti-ferroptotic metabolites 7-DHC and 7-DHD which, when accumulated, divert the propagation of peroxyl radical-mediated damage from phospholipid components to its sterol core, protecting plasma and mitochondrial membranes from phospholipid autoxidation. The protein is 7-dehydrocholesterol reductase (dhcr7) of Danio rerio (Zebrafish).